The sequence spans 476 residues: Probable cytosol aminopeptidase (476 aa).

Residues Lys242 and Asp247 each contribute to the Mn(2+) site. Lys254 is a catalytic residue. Mn(2+)-binding residues include Asp265, Asp324, and Glu326. The active site involves Arg328.

The protein belongs to the peptidase M17 family. Requires Mn(2+) as cofactor.

The protein resides in the cytoplasm. The catalysed reaction is Release of an N-terminal amino acid, Xaa-|-Yaa-, in which Xaa is preferably Leu, but may be other amino acids including Pro although not Arg or Lys, and Yaa may be Pro. Amino acid amides and methyl esters are also readily hydrolyzed, but rates on arylamides are exceedingly low.. It catalyses the reaction Release of an N-terminal amino acid, preferentially leucine, but not glutamic or aspartic acids.. In terms of biological role, presumably involved in the processing and regular turnover of intracellular proteins. Catalyzes the removal of unsubstituted N-terminal amino acids from various peptides. This chain is Probable cytosol aminopeptidase, found in Treponema denticola (strain ATCC 35405 / DSM 14222 / CIP 103919 / JCM 8153 / KCTC 15104).